The following is a 171-amino-acid chain: Large ribosomal subunit protein uL10 (171 aa).

Belongs to the universal ribosomal protein uL10 family. In terms of assembly, part of the ribosomal stalk of the 50S ribosomal subunit. The N-terminus interacts with L11 and the large rRNA to form the base of the stalk. The C-terminus forms an elongated spine to which L12 dimers bind in a sequential fashion forming a multimeric L10(L12)X complex.

Functionally, forms part of the ribosomal stalk, playing a central role in the interaction of the ribosome with GTP-bound translation factors. This Nitrosomonas europaea (strain ATCC 19718 / CIP 103999 / KCTC 2705 / NBRC 14298) protein is Large ribosomal subunit protein uL10.